The primary structure comprises 443 residues: ATP-dependent protease ATPase subunit HslU (443 aa).

Residues Ile-18, Gly-60–Glu-65, Asp-256, Glu-321, and Arg-393 each bind ATP.

The protein belongs to the ClpX chaperone family. HslU subfamily. A double ring-shaped homohexamer of HslV is capped on each side by a ring-shaped HslU homohexamer. The assembly of the HslU/HslV complex is dependent on binding of ATP.

It is found in the cytoplasm. Functionally, ATPase subunit of a proteasome-like degradation complex; this subunit has chaperone activity. The binding of ATP and its subsequent hydrolysis by HslU are essential for unfolding of protein substrates subsequently hydrolyzed by HslV. HslU recognizes the N-terminal part of its protein substrates and unfolds these before they are guided to HslV for hydrolysis. The sequence is that of ATP-dependent protease ATPase subunit HslU from Vibrio parahaemolyticus serotype O3:K6 (strain RIMD 2210633).